Here is a 274-residue protein sequence, read N- to C-terminus: Ethanolamine ammonia-lyase small subunit (274 aa).

Residues valine 161, glutamate 182, and cysteine 211 each coordinate adenosylcob(III)alamin.

This sequence belongs to the EutC family. The basic unit is a heterodimer which dimerizes to form tetramers. The heterotetramers trimerize; 6 large subunits form a core ring with 6 small subunits projecting outwards. Adenosylcob(III)alamin is required as a cofactor.

It localises to the bacterial microcompartment. It catalyses the reaction ethanolamine = acetaldehyde + NH4(+). It functions in the pathway amine and polyamine degradation; ethanolamine degradation. In terms of biological role, catalyzes the deamination of various vicinal amino-alcohols to oxo compounds. Allows this organism to utilize ethanolamine as the sole source of nitrogen and carbon in the presence of external vitamin B12. In Pseudomonas fluorescens (strain ATCC BAA-477 / NRRL B-23932 / Pf-5), this protein is Ethanolamine ammonia-lyase small subunit.